Consider the following 821-residue polypeptide: LPS-assembly protein LptD (821 aa).

The first 20 residues, 1–20, serve as a signal peptide directing secretion; sequence MGKRLFWTALSGLMVSAAHA.

This sequence belongs to the LptD family. Component of the lipopolysaccharide transport and assembly complex. Interacts with LptE and LptA.

Its subcellular location is the cell outer membrane. Together with LptE, is involved in the assembly of lipopolysaccharide (LPS) at the surface of the outer membrane. The protein is LPS-assembly protein LptD of Chromohalobacter salexigens (strain ATCC BAA-138 / DSM 3043 / CIP 106854 / NCIMB 13768 / 1H11).